Reading from the N-terminus, the 226-residue chain is Small ribosomal subunit protein uS3 (226 aa).

Residues 36–104 (IRKYLENRLS…KIQINIFEIK (69 aa)) enclose the KH type-2 domain.

The protein belongs to the universal ribosomal protein uS3 family. Part of the 30S ribosomal subunit. Forms a tight complex with proteins S10 and S14.

Its function is as follows. Binds the lower part of the 30S subunit head. Binds mRNA in the 70S ribosome, positioning it for translation. This Karelsulcia muelleri (strain GWSS) (Sulcia muelleri) protein is Small ribosomal subunit protein uS3.